The chain runs to 948 residues: Coatomer subunit beta-2 (948 aa).

HEAT repeat units follow at residues 49 to 87 (ETIPQLFITIIRYVLPSEDHTIQKLLLLYLELIEKTDSK), 92 to 126 (PEMILICQNLRNNLQHPNEYIRGVTLRFLCRMKET), 127 to 164 (EIVEPLTPSVLQNLEHRHPFVRRNAILAIMSIYKLPHG), 274 to 311 (TAIRAAANTYCQLLLSQSDNNVKLILLDRLYELKTLHR), 312 to 349 (DIMVELIIDVLRALSSPNLDIRRKTLDIALDLITHHNI), and 391 to 428 (EVASTVVHLLMDFLGDSNVASALDVVVFVREIIETNPK).

As to quaternary structure, oligomeric complex that consists of at least the alpha, beta, beta', gamma, delta, epsilon and zeta subunits.

It is found in the cytoplasm. The protein localises to the golgi apparatus membrane. Its subcellular location is the cytoplasmic vesicle. The protein resides in the COPI-coated vesicle membrane. In terms of biological role, the coatomer is a cytosolic protein complex that binds to dilysine motifs and reversibly associates with Golgi non-clathrin-coated vesicles, which further mediate biosynthetic protein transport from the ER, via the Golgi up to the trans Golgi network. Coatomer complex is required for budding from Golgi membranes, and is essential for the retrograde Golgi-to-ER transport of dilysine-tagged proteins. This chain is Coatomer subunit beta-2, found in Arabidopsis thaliana (Mouse-ear cress).